The chain runs to 189 residues: Apolipoprotein D (189 aa).

A signal peptide spans 1–21; that stretch reads MAPTLLLLLPALAGLISVAQG. Q22 is subject to Pyrrolidone carboxylic acid. 2 cysteine pairs are disulfide-bonded: C29-C135 and C62-C186. 2 N-linked (GlcNAc...) asparagine glycosylation sites follow: N66 and N99.

It belongs to the calycin superfamily. Lipocalin family. In terms of assembly, homodimer. As to expression, most heavily expressed in adrenal gland, lung, brain, testis and spleen.

The protein localises to the secreted. Functionally, APOD occurs in the macromolecular complex with lecithin-transport and binding of bilin. Appears to be able to transport a variety of ligands in a number of different contexts. The chain is Apolipoprotein D (APOD) from Oryctolagus cuniculus (Rabbit).